The following is a 467-amino-acid chain: Asparagine--tRNA ligase (467 aa).

This sequence belongs to the class-II aminoacyl-tRNA synthetase family. As to quaternary structure, homodimer.

It is found in the cytoplasm. It carries out the reaction tRNA(Asn) + L-asparagine + ATP = L-asparaginyl-tRNA(Asn) + AMP + diphosphate + H(+). The polypeptide is Asparagine--tRNA ligase (Legionella pneumophila (strain Corby)).